Reading from the N-terminus, the 458-residue chain is Ammonium transporter Rh type B (458 aa).

Over 1 to 13 (MAKSPRRVAGRRL) the chain is Cytoplasmic. The helical transmembrane segment at 14–34 (LLPLLCLFFQGATAILFAIFV) threads the bilayer. Topologically, residues 35-61 (RYDQQTDAALWHGGNHSNADNEFYFRY) are extracellular. Asn-49 carries N-linked (GlcNAc...) asparagine glycosylation. A helical transmembrane segment spans residues 62 to 82 (PSFQDVHAMVFVGFGFLMVFL). Residues 83–86 (QRYG) lie on the Cytoplasmic side of the membrane. The helical transmembrane segment at 87–107 (YSSLGFTFLLGAFALQWATLV) threads the bilayer. Residues 108–124 (QGFLHSFHGGHIHVGME) lie on the Extracellular side of the membrane. A helical transmembrane segment spans residues 125 to 145 (SLINADFCAGAVLISFGAVLG). Topologically, residues 146–149 (KTGP) are cytoplasmic. Residues 150-170 (AQLLLMALLEVALFGLNEFVL) form a helical membrane-spanning segment. At 171 to 178 (LCLLGVRD) the chain is on the extracellular side. Residues 179 to 201 (AGGSMTIHTFGAYFGLVLSRVLY) form a helical membrane-spanning segment. The Cytoplasmic portion of the chain corresponds to 202 to 219 (RPHLEKSQHRQGSVYHSD). A helical membrane pass occupies residues 220–240 (LFAMIGTIFLWIFWPSFNSAL). Over 241–251 (TSRGDGQPRTA) the chain is Extracellular. A helical transmembrane segment spans residues 252–272 (LNTYYSLTASTLSTFALSALV). The Cytoplasmic segment spans residues 273-282 (GKDGRLDMVH). Residues 283 to 303 (VQNAALAGGVVVGTASEMMLT) form a helical membrane-spanning segment. Position 304 (Pro-304) is a topological domain, extracellular. The chain crosses the membrane as a helical span at residues 305–325 (FGALAAGCLAGAISTLGYKFF). Over 326–346 (TPILESKLKIQDTCGVHNLHG) the chain is Cytoplasmic. A helical membrane pass occupies residues 347–367 (MPGVLGALLGALMTGLTTHEA). At 368-393 (YGDGLQSVFPLIAEGQRSATSQAIYQ) the chain is on the extracellular side. Residues 394-414 (LFGLSVTLLFASAGGVLGGLL) form a helical membrane-spanning segment. The Cytoplasmic segment spans residues 415 to 458 (LKLPFLDAPPDSQCYEDQMCWEVPGEHGYEAQEALRVEEPDTEA). The interval 416–424 (KLPFLDAPP) is interaction with ANK3. The Basolateral sorting signal motif lies at 429-432 (YEDQ).

Belongs to the ammonium transporter (TC 2.A.49) family. Rh subfamily. Interacts (via C-terminus) with ANK2 and ANK3; required for targeting to the basolateral membrane. N-glycosylated.

Its subcellular location is the cell membrane. The protein resides in the basolateral cell membrane. The enzyme catalyses NH4(+)(in) = NH4(+)(out). The catalysed reaction is methylamine(out) = methylamine(in). It carries out the reaction CO2(out) = CO2(in). In terms of biological role, ammonium transporter involved in the maintenance of acid-base homeostasis. Transports ammonium and its related derivative methylammonium across the basolateral plasma membrane of epithelial cells likely contributing to renal transepithelial ammonia transport and ammonia metabolism. May transport either NH4(+) or NH3 ammonia species predominantly mediating an electrogenic NH4(+) transport. May act as a CO2 channel providing for renal acid secretion. The polypeptide is Ammonium transporter Rh type B (RHBG) (Oryctolagus cuniculus (Rabbit)).